The sequence spans 201 residues: Glutathione peroxidase 1 (201 aa).

Position 32 is a phosphoserine (Ser-32). The active site involves Sec-47. Position 47 (Sec-47) is a non-standard amino acid, selenocysteine. 3 positions are modified to N6-acetyllysine; alternate: Lys-86, Lys-112, and Lys-146. 3 positions are modified to N6-succinyllysine; alternate: Lys-86, Lys-112, and Lys-146. A phosphoserine mark is found at Ser-195 and Ser-199.

This sequence belongs to the glutathione peroxidase family. In terms of assembly, homotetramer. Interacts with MIEN1. Post-translationally, during periods of oxidative stress, Sec-47 may react with a superoxide radical, irreversibly lose hydroselenide and be converted to dehydroalanine.

Its subcellular location is the cytoplasm. The protein resides in the mitochondrion. It carries out the reaction 2 glutathione + H2O2 = glutathione disulfide + 2 H2O. It catalyses the reaction a hydroperoxy polyunsaturated fatty acid + 2 glutathione = a hydroxy polyunsaturated fatty acid + glutathione disulfide + H2O. The catalysed reaction is tert-butyl hydroperoxide + 2 glutathione = tert-butanol + glutathione disulfide + H2O. The enzyme catalyses cumene hydroperoxide + 2 glutathione = 2-phenylpropan-2-ol + glutathione disulfide + H2O. It carries out the reaction (13S)-hydroperoxy-(9Z,11E)-octadecadienoate + 2 glutathione = (13S)-hydroxy-(9Z,11E)-octadecadienoate + glutathione disulfide + H2O. It catalyses the reaction (9S)-hydroperoxy-(10E,12Z)-octadecadienoate + 2 glutathione = (9S)-hydroxy-(10E,12Z)-octadecadienoate + glutathione disulfide + H2O. The catalysed reaction is (5S)-hydroperoxy-(6E,8Z,11Z,14Z)-eicosatetraenoate + 2 glutathione = (5S)-hydroxy-(6E,8Z,11Z,14Z)-eicosatetraenoate + glutathione disulfide + H2O. The enzyme catalyses (12S)-hydroperoxy-(5Z,8Z,10E,14Z)-eicosatetraenoate + 2 glutathione = (12S)-hydroxy-(5Z,8Z,10E,14Z)-eicosatetraenoate + glutathione disulfide + H2O. It carries out the reaction (12R)-hydroperoxy-(5Z,8Z,10E,14Z)-eicosatetraenoate + 2 glutathione = (12R)-hydroxy-(5Z,8Z,10E,14Z)-eicosatetraenoate + glutathione disulfide + H2O. It catalyses the reaction (15S)-hydroperoxy-(5Z,8Z,11Z,13E)-eicosatetraenoate + 2 glutathione = (15S)-hydroxy-(5Z,8Z,11Z,13E)-eicosatetraenoate + glutathione disulfide + H2O. The catalysed reaction is (5S)-hydroperoxy-(6E,8Z,11Z,14Z,17Z)-eicosapentaenoate + 2 glutathione = (5S)-hydroxy-(6E,8Z,11Z,14Z,17Z)-eicosapentaenoate + glutathione disulfide + H2O. The enzyme catalyses (12S)-hydroperoxy-(5Z,8Z,10E,14Z,17Z)-eicosapentaenoate + 2 glutathione = (12S)-hydroxy-(5Z,8Z,10E,14Z,17Z)-eicosapentaenoate + glutathione disulfide + H2O. It carries out the reaction (15S)-hydroperoxy-(5Z,8Z,11Z,13E,17Z)-eicosapentaenoate + 2 glutathione = (15S)-hydroxy-(5Z,8Z,11Z,13E,17Z)-eicosapentaenoate + glutathione disulfide + H2O. It catalyses the reaction (15S)-hydroperoxy-(11Z,13E)-eicosadienoate + 2 glutathione = (15S)-hydroxy-(11Z,13E)-eicosadienoate + glutathione disulfide + H2O. The catalysed reaction is (17S)-hydroperoxy-(4Z,7Z,10Z,13Z,15E,19Z)-docosahexaenoate + 2 glutathione = (17S)-hydroxy-(4Z,7Z,10Z,13Z,15E,19Z)-docosahexaenoate + glutathione disulfide + H2O. In terms of biological role, catalyzes the reduction of hydroperoxides in a glutathione-dependent manner thus regulating cellular redox homeostasis. Can reduce small soluble hydroperoxides such as H2O2, cumene hydroperoxide and tert-butyl hydroperoxide, as well as several fatty acid-derived hydroperoxides. In platelets catalyzes the reduction of 12-hydroperoxyeicosatetraenoic acid, the primary product of the arachidonate 12-lipoxygenase pathway. This chain is Glutathione peroxidase 1 (GPX1), found in Pan troglodytes (Chimpanzee).